Here is a 288-residue protein sequence, read N- to C-terminus: MAASPYSIFAVQLLLLASWMLSSSSSNFNQDFNIAWGGGRARILNNGELVTLSLDKASGSGFRSKNLYLFGKIDMQLKLVPGNSAGTVTTYYLSSEGSVRDEIDFEFLGNLTGEPYTLHTNVYSHGKGEREQQFRLWFDPAADFHTYSILWNSKTIVFYVDQTPVREFKNMESIGVPYLRQPMRLFSSIWNADEWATRGGLIKTDWTQAPFTTSYRNFRADNACVWAAKASSCGLAAGGNAWLSVELDAKSRGRLRWVRRNQMIYDYCVDGKRFPRGVPPECKLNLHI.

An N-terminal signal peptide occupies residues 1 to 25; that stretch reads MAASPYSIFAVQLLLLASWMLSSSS. In terms of domain architecture, GH16 spans 26–215; it reads SNFNQDFNIA…WTQAPFTTSY (190 aa). The Nucleophile role is filled by Glu102. The Proton donor role is filled by Glu106. Glu106 is a xyloglucan binding site. Asn110 carries N-linked (GlcNAc...) asparagine glycosylation. Xyloglucan-binding positions include 119-121, 129-131, 194-195, and Gly199; these read HTN, ERE, and EW. 2 disulfide bridges follow: Cys224–Cys233 and Cys268–Cys282. Residue Arg273 participates in xyloglucan binding.

It belongs to the glycosyl hydrolase 16 family. XTH group 2 subfamily. Post-translationally, contains at least one intrachain disulfide bond essential for its enzymatic activity. In terms of tissue distribution, highly expressed in mature fruits. Very low expression in leaves, flowers, calyces and stems.

The protein localises to the secreted. Its subcellular location is the cell wall. It localises to the extracellular space. The protein resides in the apoplast. The enzyme catalyses breaks a beta-(1-&gt;4) bond in the backbone of a xyloglucan and transfers the xyloglucanyl segment on to O-4 of the non-reducing terminal glucose residue of an acceptor, which can be a xyloglucan or an oligosaccharide of xyloglucan.. Catalyzes xyloglucan endotransglycosylation (XET). Cleaves and religates xyloglucan polymers. Does not catalyze xyloglucan endohydrolysis (XEH). Overexpression in Arabidopsis transgenic plants causes accelerated dark-induced leaf senescence and higher lipid peroxidation of the leaf cells. Overexpression in transgenic tomato plants promotes fruit ripening and softening. Probably involved in cell wall restructuring during postharvest fruit softening. This Diospyros kaki (Kaki persimmon) protein is Xyloglucan endotransglucosylase protein 8.